A 295-amino-acid polypeptide reads, in one-letter code: Large ribosomal subunit protein uL18 (295 aa).

Residues 251–261 (PTPKKKTDFAG) show a composition bias toward basic and acidic residues. The segment at 251–295 (PTPKKKTDFAGKTKRWNRKKMTFSQRRDRVKQKKASFLRAKQQEG) is disordered. The segment covering 262 to 271 (KTKRWNRKKM) has biased composition (basic residues).

Belongs to the universal ribosomal protein uL18 family. In terms of assembly, component of the large ribosomal subunit (LSU).

It is found in the cytoplasm. The protein resides in the nucleus. Component of the ribosome, a large ribonucleoprotein complex responsible for the synthesis of proteins in the cell. The small ribosomal subunit (SSU) binds messenger RNAs (mRNAs) and translates the encoded message by selecting cognate aminoacyl-transfer RNA (tRNA) molecules. The large subunit (LSU) contains the ribosomal catalytic site termed the peptidyl transferase center (PTC), which catalyzes the formation of peptide bonds, thereby polymerizing the amino acids delivered by tRNAs into a polypeptide chain. The nascent polypeptides leave the ribosome through a tunnel in the LSU and interact with protein factors that function in enzymatic processing, targeting, and the membrane insertion of nascent chains at the exit of the ribosomal tunnel. The polypeptide is Large ribosomal subunit protein uL18 (RPL5) (Styela clava (Sea squirt)).